Consider the following 338-residue polypeptide: Fructose-1,6-bisphosphatase class 1 1 (338 aa).

Mg(2+) contacts are provided by Glu-91, Asp-113, Leu-115, and Asp-116. Residues 116-119 (DGSS), Asn-208, and Lys-274 contribute to the substrate site. Glu-280 is a Mg(2+) binding site.

The protein belongs to the FBPase class 1 family. Homotetramer. Requires Mg(2+) as cofactor.

The protein localises to the cytoplasm. It catalyses the reaction beta-D-fructose 1,6-bisphosphate + H2O = beta-D-fructose 6-phosphate + phosphate. Its pathway is carbohydrate biosynthesis; gluconeogenesis. This Cupriavidus taiwanensis (strain DSM 17343 / BCRC 17206 / CCUG 44338 / CIP 107171 / LMG 19424 / R1) (Ralstonia taiwanensis (strain LMG 19424)) protein is Fructose-1,6-bisphosphatase class 1 1.